The chain runs to 261 residues: 7beta-hydroxysteroid dehydrogenase (261 aa).

NADP(+) contacts are provided by residues 17 to 21 (TEGIG), 40 to 41 (RR), and 66 to 67 (DL). The Proton acceptor role is filled by Y156.

The protein belongs to the short-chain dehydrogenases/reductases (SDR) family. As to quaternary structure, homodimer.

The enzyme catalyses a 7beta-hydroxysteroid + NADP(+) = a 7-oxosteroid + NADPH + H(+). The catalysed reaction is ursocholate + NADP(+) = 3alpha,12alpha-dihydroxy-7-oxo-5beta-cholanate + NADPH + H(+). It carries out the reaction 7-oxolithocholate + NADPH + H(+) = ursodeoxycholate + NADP(+). It catalyses the reaction 3alpha,7beta-dihydroxy-12-oxo-5beta-cholan-24-oate + NADP(+) = 7,12-dioxo-lithocholate + NADPH + H(+). The enzyme catalyses 7beta-hydroxy-3,12-dioxo-5beta-cholan-24-oate + NADP(+) = dehydrocholate + NADPH + H(+). Functionally, 7beta-hydroxysteroid dehydrogenase that catalyzes the reduction of the 7-oxo group of 7-oxosteroids, such as 3alpha,12alpha-dihydroxy-7-oxo-5beta-cholanate, 7-oxolithocholate, 7,12-dioxo-lithocholate and dehydrocholate, to the corresponding 7beta-hydroxysteroids. Is also able to catalyze the reverse oxidation reactions. Together with 7alpha-HSDH encoded in the adjacent gene, is likely involved in the epimerization of the hydroxy group at C-7 of primary bile acids through 7-keto bile acid intermediates. In Clostridium sardiniense (Clostridium absonum), this protein is 7beta-hydroxysteroid dehydrogenase.